Reading from the N-terminus, the 212-residue chain is Adenylate kinase (212 aa).

Position 10–15 (10–15 (GAGKGT)) interacts with ATP. The tract at residues 30–59 (AIGDIFRAIIKTSSKDAEVINSYVEQGKLI) is NMP. AMP is bound by residues R36, 57 to 59 (KLI), 85 to 88 (GYPR), and Q92. Positions 122-160 (GRYSCKSCGKIYNDYFLKPRIDKICDVCKSSVFEYRKDD) are LID. R123 serves as a coordination point for ATP. Residues C126 and C129 each coordinate Zn(2+). 132-133 (IY) contributes to the ATP binding site. Zn(2+)-binding residues include C146 and C149. AMP-binding residues include R157 and R168. ATP is bound at residue K196.

This sequence belongs to the adenylate kinase family. In terms of assembly, monomer.

It is found in the cytoplasm. It catalyses the reaction AMP + ATP = 2 ADP. It participates in purine metabolism; AMP biosynthesis via salvage pathway; AMP from ADP: step 1/1. Functionally, catalyzes the reversible transfer of the terminal phosphate group between ATP and AMP. Plays an important role in cellular energy homeostasis and in adenine nucleotide metabolism. The polypeptide is Adenylate kinase (Rickettsia bellii (strain RML369-C)).